We begin with the raw amino-acid sequence, 316 residues long: Ribosomal RNA small subunit methyltransferase H (316 aa).

Residues S35–H37, D55, F84, D105, and Q112 contribute to the S-adenosyl-L-methionine site.

Belongs to the methyltransferase superfamily. RsmH family.

The protein resides in the cytoplasm. It carries out the reaction cytidine(1402) in 16S rRNA + S-adenosyl-L-methionine = N(4)-methylcytidine(1402) in 16S rRNA + S-adenosyl-L-homocysteine + H(+). Its function is as follows. Specifically methylates the N4 position of cytidine in position 1402 (C1402) of 16S rRNA. In Streptococcus equi subsp. zooepidemicus (strain MGCS10565), this protein is Ribosomal RNA small subunit methyltransferase H.